Consider the following 370-residue polypeptide: GMP synthase [glutamine-hydrolyzing] subunit B (370 aa).

Residues 3 to 189 (FDPQKFVDEI…LGLPRDIYNR (187 aa)) enclose the GMPS ATP-PPase domain. 29–35 (SGGVDST) contacts ATP.

In terms of assembly, heterodimer composed of a glutamine amidotransferase subunit (A) and a GMP-binding subunit (B).

It carries out the reaction XMP + L-glutamine + ATP + H2O = GMP + L-glutamate + AMP + diphosphate + 2 H(+). It functions in the pathway purine metabolism; GMP biosynthesis; GMP from XMP (L-Gln route): step 1/1. Its function is as follows. Catalyzes the synthesis of GMP from XMP. The sequence is that of GMP synthase [glutamine-hydrolyzing] subunit B (guaAB) from Sulfurisphaera tokodaii (strain DSM 16993 / JCM 10545 / NBRC 100140 / 7) (Sulfolobus tokodaii).